An 893-amino-acid polypeptide reads, in one-letter code: MSSKKNRKRLNQSAENGSSLPSAASSCAEARAPSAGSDFAATSGTLTVTNLLEKVDDKIPKTFQNSLIHLGLNTMKSANICIGRPVLLTSLNGKQEVYTAWPMAGFPGGKVGLSEMAQKNVGVRPGDAIQVQPLVGAVLQAEEMDVALSDKDMEINEEELTGCILRKLDGKIVLPGNFLYCTFYGRPYKLQVLRVKGADGMILGGPQSDSDTDAQRMAFEQSSMETSSLELSLQLSQLDLEDTQIPTSRSTPYKPIDDRITNKASDVLLDVTQSPGDGSGLMLEEVTGLKCNFESAREGNEQLTEEERLLKFSIGAKCNTDTFYFISSTTRVNFTEIDKNSKEQDNQFKVTYDMIGGLSSQLKAIREIIELPLKQPELFKSYGIPAPRGVLLYGPPGTGKTMIARAVANEVGAYVSVINGPEIISKFYGETEAKLRQIFAEATLRHPSIIFIDELDALCPKREGAQNEVEKRVVASLLTLMDGIGSEVSEGQVLVLGATNRPHALDAALRRPGRFDKEIEIGVPNAQDRLDILQKLLRRVPHLLTEAELLQLANSAHGYVGADLKVLCNEAGLCALRRILKKQPNLPDVKVAGLVKITLKDFLQAMNDIRPSAMREIAIDVPNVSWSDIGGLESIKLKLEQAVEWPLKHPESFIRMGIQPPKGVLLYGPPGCSKTMIAKALANESGLNFLAIKGPELMNKYVGESERAVRETFRKARAVAPSIIFFDELDALAVERGSSLGAGNVADRVLAQLLTEMDGIEQLKDVTILAATNRPDRIDKALMRPGRIDRIIYVPLPDAATRREIFKLQFHSMPVSNEVDLDELILQTDAYSGAEIVAVCREAALLALEEDIQANLIMKRHFTQALSTVTPRIPESLRRFYEDYQEKSGLHTL.

Positions 1 to 10 (MSSKKNRKRL) are enriched in basic residues. A disordered region spans residues 1 to 26 (MSSKKNRKRLNQSAENGSSLPSAASS). The segment at 1 to 237 (MSSKKNRKRL…SLELSLQLSQ (237 aa)) is required for interaction with AFG2B and CINP. Residues 11-25 (NQSAENGSSLPSAAS) are compositionally biased toward polar residues. Threonine 272 bears the Phosphothreonine mark. Phosphoserine occurs at positions 274 and 279. ATP-binding positions include 394–401 (GPPGTGKT) and 668–675 (GPPGCSKT). Lysine 859 is covalently cross-linked (Glycyl lysine isopeptide (Lys-Gly) (interchain with G-Cter in SUMO2)).

The protein belongs to the AAA ATPase family. AFG2 subfamily. Part of the 55LCC heterohexameric ATPase complex composed at least of AIRIM, AFG2A, AFG2B and CINP. Associates with pre-60S ribosomal particles.

It is found in the cytoplasm. It localises to the mitochondrion. The protein resides in the cytoskeleton. The protein localises to the spindle. It catalyses the reaction ATP + H2O = ADP + phosphate + H(+). With respect to regulation, AFG2A alone display limited ATPase activity and is not regulated by RNA or DNA binding. In the context of 55LCC heterohexameric ATPase complex, the ATPase activity increases and is stimulated by DNA binding and inhibited in presence of RNA. ATP-dependent chaperone part of the 55LCC heterohexameric ATPase complex which is chromatin-associated and promotes replisome proteostasis to maintain replication fork progression and genome stability. Required for replication fork progression, sister chromatid cohesion, and chromosome stability. The ATPase activity is specifically enhanced by replication fork DNA and is coupled to cysteine protease-dependent cleavage of replisome substrates in response to replication fork damage. Uses ATPase activity to process replisome substrates in S-phase, facilitating their proteolytic turnover from chromatin to ensure DNA replication and mitotic fidelity. Plays an essential role in the cytoplasmic maturation steps of pre-60S ribosomal particles by promoting the release of shuttling protein RSL24D1/RLP24 from the pre-ribosomal particles. May be involved in morphological and functional mitochondrial transformations during spermatogenesis. This chain is ATPase family gene 2 protein homolog A, found in Homo sapiens (Human).